Here is a 329-residue protein sequence, read N- to C-terminus: MLRVFIFFVFLGSGLTGRIKPQVTCKYFISENNTWYKYNVTILNSSIILPAYNTIPSNAAGISCTCHDIDYLQKNNISIHYNTSILKTFQDIRIIRCGMKNISEIAGGFGKELKFLDLRYNDLQVIDYNILRKLIRSNTPTYLYYNNLMCGKRNCPLYYFLLKQEQTYLKRLPQFFLRRISFSNNNTYLYHFLSCGNKPGHEFLEYQTKYCRTKFPEINITVNQLIAKKNTERYKSCYPLVFISILCSCISFLFLFICLLRSICKKYSCTKQDKSSHNYIPLIPSYTFSLKKHRHPETAVVEDHTTSANSPIVYIPTTEEKKVSCSRRK.

Residues 1–31 (MLRVFIFFVFLGSGLTGRIKPQVTCKYFISE) form the signal peptide. N-linked (GlcNAc...) asparagine; by host glycans are attached at residues N32, N39, N44, N76, N82, and N101. Over 32–239 (NNTWYKYNVT…NTERYKSCYP (208 aa)) the chain is Extracellular. The LRR repeat unit spans residues 112-133 (ELKFLDLRYNDLQVIDYNILRK). Residues N185 and N219 are each glycosylated (N-linked (GlcNAc...) asparagine; by host). The cysteines at positions 195 and 237 are disulfide-linked. Residues 240-260 (LVFISILCSCISFLFLFICLL) form a helical membrane-spanning segment. Residues 261–329 (RSICKKYSCT…EKKVSCSRRK (69 aa)) are Cytoplasmic-facing.

The protein belongs to the asfivirus I329L family. In terms of processing, highly glycosylated.

Its subcellular location is the host endoplasmic reticulum membrane. It is found in the host Golgi apparatus membrane. Its function is as follows. Viral TLR3 homolog that probably prevents TLR3 dimerization and subsequent induction of IFN. Inhibits dsRNA-stimulated activation of NF-kB and IRF3. This is Transmembrane protein I329L from Ornithodoros (relapsing fever ticks).